We begin with the raw amino-acid sequence, 994 residues long: Valine--tRNA ligase (994 aa).

The 'HIGH' region motif lies at 43 to 53; the sequence is PNVTGTLHMGH. The segment at 332–356 is disordered; the sequence is IASGATSDTTDTPSDSDASNASNQH. Residues 333–353 show a composition bias toward low complexity; sequence ASGATSDTTDTPSDSDASNAS. The short motif at 585–589 is the 'KMSKS' region element; sequence KMSKS. K588 is an ATP binding site. Residues 691–713 form a disordered region; the sequence is TAHSPAQHQAGQDGQDVPRTPQP. Residues 928–994 are a coiled coil; the sequence is LIDVDAERAR…NGLRERRTTL (67 aa).

This sequence belongs to the class-I aminoacyl-tRNA synthetase family. ValS type 1 subfamily. Monomer.

The protein localises to the cytoplasm. The catalysed reaction is tRNA(Val) + L-valine + ATP = L-valyl-tRNA(Val) + AMP + diphosphate. Functionally, catalyzes the attachment of valine to tRNA(Val). As ValRS can inadvertently accommodate and process structurally similar amino acids such as threonine, to avoid such errors, it has a 'posttransfer' editing activity that hydrolyzes mischarged Thr-tRNA(Val) in a tRNA-dependent manner. The polypeptide is Valine--tRNA ligase (Xylella fastidiosa (strain M23)).